A 630-amino-acid polypeptide reads, in one-letter code: Forkhead box protein O (630 aa).

The interval 1–45 (MDGFVQEWSNLPRSDNGLHMDQLVGELPTDGGFEPQTRARSNTWP) is disordered. Residue Thr-43 is modified to Phosphothreonine; by PKB/AKT1. A DNA-binding region (fork-head) is located at residues 92-198 (WGNLSYADLI…ETSRYEKRRG (107 aa)). Ser-187 carries the phosphoserine; by PKB/AKT1 modification. Residues 214-260 (GLNDATPSPSSSVSEGLDHFPESPLHSGGFQLSPDFRQRASSNASSC) form a disordered region. A compositionally biased stretch (polar residues) spans 218-227 (ATPSPSSSVS). Position 255 is a phosphoserine; by PKB/AKT1 (Ser-255). 3 positions are modified to phosphoserine: Ser-258, Ser-259, and Ser-264. Disordered stretches follow at residues 318–379 (SAAS…QQQQ) and 403–432 (TRDG…SLNT). Low complexity-rich tracts occupy residues 332–350 (QQQQ…QLPQ) and 367–379 (QPQA…QQQQ). Composition is skewed to polar residues over residues 408 to 417 (SPNSVTTTMS) and 423 to 432 (SEPSSDSLNT).

In terms of assembly, interacts with melt.

Its subcellular location is the cytoplasm. It is found in the nucleus. Functionally, transcription factor involved in the regulation of the insulin signaling pathway. Consistently activates both the downstream target Thor\d4EBP and the feedback control target InR. Involved in negative regulation of the cell cycle, modulating cell growth and proliferation. In response to cellular stresses, such as nutrient deprivation or increased levels of reactive oxygen species, foxo is activated and inhibits growth through the action of target genes such as Thor. Foxo activated in the adult fat body can regulate lifespan in adults; an insulin peptide itself may function as one secondary messenger of insulin-regulated aging. Also regulates Lip4, homolog of human acid lipases, thereby acting as a key modulator of lipid metabolism by insulin signaling and integrates insulin responses to glucose and lipid homeostasis. This chain is Forkhead box protein O, found in Drosophila grimshawi (Hawaiian fruit fly).